The chain runs to 319 residues: Phospho-N-acetylmuramoyl-pentapeptide-transferase (319 aa).

A run of 10 helical transmembrane segments spans residues 5–25 (LIPF…FIGF), 51–71 (TMGG…VLIW), 79–99 (TWIL…DDGI), 116–136 (LGQI…HFAF), 149–169 (SFLF…AVNL), 172–192 (GLDG…AWIA), 197–217 (NWVI…FFIF), 224–244 (IFMG…VSIF), 252–272 (LLIG…VISF), and 299–319 (VDIV…IIWG).

Belongs to the glycosyltransferase 4 family. MraY subfamily. It depends on Mg(2+) as a cofactor.

Its subcellular location is the cell membrane. It carries out the reaction UDP-N-acetyl-alpha-D-muramoyl-L-alanyl-gamma-D-glutamyl-L-lysyl-D-alanyl-D-alanine + di-trans,octa-cis-undecaprenyl phosphate = Mur2Ac(oyl-L-Ala-gamma-D-Glu-L-Lys-D-Ala-D-Ala)-di-trans,octa-cis-undecaprenyl diphosphate + UMP. It functions in the pathway cell wall biogenesis; peptidoglycan biosynthesis. Catalyzes the initial step of the lipid cycle reactions in the biosynthesis of the cell wall peptidoglycan: transfers peptidoglycan precursor phospho-MurNAc-pentapeptide from UDP-MurNAc-pentapeptide onto the lipid carrier undecaprenyl phosphate, yielding undecaprenyl-pyrophosphoryl-MurNAc-pentapeptide, known as lipid I. This chain is Phospho-N-acetylmuramoyl-pentapeptide-transferase, found in Lactobacillus gasseri (strain ATCC 33323 / DSM 20243 / BCRC 14619 / CIP 102991 / JCM 1131 / KCTC 3163 / NCIMB 11718 / NCTC 13722 / AM63).